Consider the following 488-residue polypeptide: MLAKKQKMQETDTEQEATPHTIQARLVSDTGEEAGPPIDLPAGITTQQLGLICNALLKNEEATPYLFFVGEDEIKKSLEDTLDLASVDTENVIDIVYQPQAVFKVRPVTRCTSSMPGHAEAVVSLNFSPDGAHLASGSGDTTVRLWDLNTETPHFTCTGHKQWVLCVSWAPDGKRLASGCKAGSIIIWDPETGQQKGRPLSGHKKHINCLAWEPYHRDPECRKLASASGDGDCRIWDVKLGQCLMNIAGHTNAVTAVRWGGAGLIYTSSKDRTVKMWRAADGILCRTFSGHAHWVNNIALSTDYVLRTGPFHPVKDRSKSHLSLSTEELQESALKRYQAVCPDEVESLVSCSDDNTLYLWRNNQNKCVERMTGHQNVVNDVKYSPDVKLIASASFDKSVRLWRASDGQYMATFRGHVQAVYTVAWSADSRLIVSGSKDSTLKVWSVQTKKLAQELPGHADEVFGVDWAPDGSRVASGGKDKVIKLWAY.

The segment at methionine 1–isoleucine 22 is disordered. A ubiquitin-like (UBL) domain region spans residues proline 19–alanine 101. 8 WD repeats span residues glycine 117 to threonine 156, glycine 159 to arginine 198, glycine 202 to asparagine 246, glycine 249 to threonine 287, leucine 329 to arginine 370, glycine 373 to threonine 412, glycine 415 to glutamate 454, and glycine 457 to tyrosine 488.

The protein belongs to the NLE1/RSA4 family. As to quaternary structure, interacts with Notch (via cytoplasmic domain). Associates with the pre-60S ribosomal particle.

The protein localises to the nucleus. It localises to the nucleolus. In terms of biological role, plays a role in regulating Notch activity. This is Protein Notchless from Drosophila melanogaster (Fruit fly).